A 177-amino-acid polypeptide reads, in one-letter code: MSRVAKAPVVVPAGVDVKINGQVITIKGKNGELTRTLNDAVEVKHADNTLTFGPRDGYADGWAQAGTARALLNSMVIGVTEGFTKKLQLVGVGYRAAVKGNVINLSLGFSHPVDHQLPAGITAECPTQTEIVLKGADKQVIGQVAADLRAYRRPEPYKGKGVRYADEVVRTKEAKKK.

Lys44 carries the post-translational modification N6-acetyllysine.

Belongs to the universal ribosomal protein uL6 family. Part of the 50S ribosomal subunit.

In terms of biological role, this protein binds to the 23S rRNA, and is important in its secondary structure. It is located near the subunit interface in the base of the L7/L12 stalk, and near the tRNA binding site of the peptidyltransferase center. The chain is Large ribosomal subunit protein uL6 from Escherichia coli O139:H28 (strain E24377A / ETEC).